A 131-amino-acid chain; its full sequence is MAKLSTDELLDAFKEMTLIELSEFVKQFEETFGVTAAAPVAVAAAPAAGGAAAAGGDAGAEQDEFDVILESAGDKKINVIKEVRALTSLGLKEAKELVEAAPKPILEKVAKDAAEKAKEALEGAGATVTLK.

It belongs to the bacterial ribosomal protein bL12 family. In terms of assembly, homodimer. Part of the ribosomal stalk of the 50S ribosomal subunit. Forms a multimeric L10(L12)X complex, where L10 forms an elongated spine to which 2 to 4 L12 dimers bind in a sequential fashion. Binds GTP-bound translation factors.

Its function is as follows. Forms part of the ribosomal stalk which helps the ribosome interact with GTP-bound translation factors. Is thus essential for accurate translation. This is Large ribosomal subunit protein bL12 from Nocardioides sp. (strain ATCC BAA-499 / JS614).